The chain runs to 752 residues: Multifunctional tryptophan biosynthesis protein (752 aa).

The 200-residue stretch at 3-202 (FTLLIDNYDS…IQMKGGKWGG (200 aa)) folds into the Glutamine amidotransferase type-1 domain. Position 58–60 (58–60 (GPG)) interacts with L-glutamine. Residue cysteine 86 is the Nucleophile; for GATase activity of the active site. Residue 136 to 137 (SL) participates in L-glutamine binding. Active-site for GATase activity residues include histidine 176 and glutamate 178. The tract at residues 231–495 (ILNKIHAQRL…DTKAFLRSLI (265 aa)) is indole-3-glycerol phosphate synthase. The tract at residues 509–752 (LVKICGIRST…VEAFVKAVRG (244 aa)) is N-(5'-phosphoribosyl)anthranilate isomerase.

The enzyme catalyses N-(5-phospho-beta-D-ribosyl)anthranilate = 1-(2-carboxyphenylamino)-1-deoxy-D-ribulose 5-phosphate. It catalyses the reaction 1-(2-carboxyphenylamino)-1-deoxy-D-ribulose 5-phosphate + H(+) = (1S,2R)-1-C-(indol-3-yl)glycerol 3-phosphate + CO2 + H2O. The catalysed reaction is chorismate + L-glutamine = anthranilate + pyruvate + L-glutamate + H(+). It functions in the pathway amino-acid biosynthesis; L-tryptophan biosynthesis; L-tryptophan from chorismate: step 1/5. It participates in amino-acid biosynthesis; L-tryptophan biosynthesis; L-tryptophan from chorismate: step 3/5. Its pathway is amino-acid biosynthesis; L-tryptophan biosynthesis; L-tryptophan from chorismate: step 4/5. Functionally, trifunctional enzyme bearing the Gln amidotransferase (GATase) domain of anthranilate synthase, indole-glycerolphosphate synthase, and phosphoribosylanthranilate isomerase activities. This chain is Multifunctional tryptophan biosynthesis protein (TRP1), found in Cryptococcus neoformans var. grubii serotype A (strain H99 / ATCC 208821 / CBS 10515 / FGSC 9487) (Filobasidiella neoformans var. grubii).